The primary structure comprises 311 residues: 4-hydroxy-tetrahydrodipicolinate synthase (311 aa).

Position 51 (Thr51) interacts with pyruvate. The active-site Proton donor/acceptor is Tyr140. Lys168 (schiff-base intermediate with substrate) is an active-site residue. Residue Ile209 participates in pyruvate binding.

It belongs to the DapA family. As to quaternary structure, homotetramer; dimer of dimers.

Its subcellular location is the cytoplasm. The catalysed reaction is L-aspartate 4-semialdehyde + pyruvate = (2S,4S)-4-hydroxy-2,3,4,5-tetrahydrodipicolinate + H2O + H(+). The protein operates within amino-acid biosynthesis; L-lysine biosynthesis via DAP pathway; (S)-tetrahydrodipicolinate from L-aspartate: step 3/4. Functionally, catalyzes the condensation of (S)-aspartate-beta-semialdehyde [(S)-ASA] and pyruvate to 4-hydroxy-tetrahydrodipicolinate (HTPA). This is 4-hydroxy-tetrahydrodipicolinate synthase from Streptococcus pneumoniae (strain ATCC BAA-255 / R6).